Reading from the N-terminus, the 282-residue chain is NADPH-dependent 7-cyano-7-deazaguanine reductase (282 aa).

Ile88 to Ser90 serves as a coordination point for substrate. An NADPH-binding site is contributed by Ser90–Lys91. Cys190 (thioimide intermediate) is an active-site residue. Asp197 serves as the catalytic Proton donor. His229 to Glu230 contacts substrate. Arg258–Gly259 provides a ligand contact to NADPH.

It belongs to the GTP cyclohydrolase I family. QueF type 2 subfamily. Homodimer.

It is found in the cytoplasm. It catalyses the reaction 7-aminomethyl-7-carbaguanine + 2 NADP(+) = 7-cyano-7-deazaguanine + 2 NADPH + 3 H(+). Its pathway is tRNA modification; tRNA-queuosine biosynthesis. Catalyzes the NADPH-dependent reduction of 7-cyano-7-deazaguanine (preQ0) to 7-aminomethyl-7-deazaguanine (preQ1). This Escherichia coli (strain SMS-3-5 / SECEC) protein is NADPH-dependent 7-cyano-7-deazaguanine reductase.